Here is a 60-residue protein sequence, read N- to C-terminus: Large ribosomal subunit protein bL32 (60 aa).

The protein belongs to the bacterial ribosomal protein bL32 family.

This is Large ribosomal subunit protein bL32 from Moorella thermoacetica (strain ATCC 39073 / JCM 9320).